The sequence spans 751 residues: Catalase-peroxidase (751 aa).

Positions 1-21 (MSNESKCPFHQTAGGGTTNRD) are disordered. The tryptophyl-tyrosyl-methioninium (Trp-Tyr) (with M-270) cross-link spans 90 to 244 (WHSAGTYRIG…LAAVQMGLIY (155 aa)). The active-site Proton acceptor is H91. A disordered region spans residues 195 to 227 (YGKDQVKAQPPGQGDLVAEPAKHGEEQNRDLSA). The segment covering 214 to 227 (PAKHGEEQNRDLSA) has biased composition (basic and acidic residues). The tryptophyl-tyrosyl-methioninium (Tyr-Met) (with W-90) cross-link spans 244-270 (YVNPEGPEGNPDPVASGKDIRETFGRM). H285 contributes to the heme b binding site. The interval 364-385 (GAHQWRPKDGKGAGTVPDAHDP) is disordered.

The protein belongs to the peroxidase family. Peroxidase/catalase subfamily. As to quaternary structure, homodimer or homotetramer. Heme b is required as a cofactor. Formation of the three residue Trp-Tyr-Met cross-link is important for the catalase, but not the peroxidase activity of the enzyme.

It catalyses the reaction H2O2 + AH2 = A + 2 H2O. The catalysed reaction is 2 H2O2 = O2 + 2 H2O. Bifunctional enzyme with both catalase and broad-spectrum peroxidase activity. In Pseudomonas putida (strain ATCC 47054 / DSM 6125 / CFBP 8728 / NCIMB 11950 / KT2440), this protein is Catalase-peroxidase.